Reading from the N-terminus, the 103-residue chain is Gibberellin-regulated protein 13 (103 aa).

The first 20 residues, 1-20, serve as a signal peptide directing secretion; that stretch reads MATKLSIIVFSIVVLHLLLS.

The protein belongs to the GASA family. Post-translationally, six disulfide bonds may be present.

It localises to the secreted. Functionally, gibberellin-regulated protein that may function in hormonal controlled steps of development such as seed germination, flowering and seed maturation. This Arabidopsis thaliana (Mouse-ear cress) protein is Gibberellin-regulated protein 13 (GASA13).